Here is a 364-residue protein sequence, read N- to C-terminus: MASCGEVNLTVDSLTSGKKVSGEAVPEGSGSPSSPSLPVPECPICLQSCVHPVRLPCRHIFCFLCVKGASWHSKRCALCRREVPEDFLERPTLLSPEELKASATGGCGTGSSGHAWYYEGRNGWWQYDERTSRELEDAFSKGKKSAEMLIAGFLYVADLENMVQYRRNEHGRRRRMKRDVVDIPKKGVAGLRLDPDPNSSAGAVPAPAVVDVSVDGAAAERESSADGADTGVSGGRPQGTFVPAPIRPPTILGGHLTSPASSSDIQLVQTLAQLNISPNEQEPEEEDAEDEDDSAAPDASGYDSESGTSDDDEQVEDEDENEHTDGSQGKHRLQQLNRPPPGGGPANSGDRSGCPDGQCTVTKV.

The segment at K18 to L37 is disordered. Over residues G22–S34 the composition is skewed to low complexity. Residues C42–R80 form an RING-type zinc finger. One can recognise a WWE domain in the interval S102 to R178. Positions 118, 121, 125, 155, 164, 174, and 186 each coordinate a glycoprotein. 2 disordered regions span residues A217 to S262 and N279 to V364. Acidic residues-rich tracts occupy residues Q281–A295 and T308–E322.

It localises to the cytoplasm. It is found in the cytosol. Its subcellular location is the nucleus. The enzyme catalyses S-ubiquitinyl-[E2 ubiquitin-conjugating enzyme]-L-cysteine + [acceptor protein]-L-lysine = [E2 ubiquitin-conjugating enzyme]-L-cysteine + N(6)-ubiquitinyl-[acceptor protein]-L-lysine.. It functions in the pathway protein modification; protein ubiquitination. Functionally, E3 ubiquitin-protein ligase that specifically binds poly-ADP-ribosylated proteins and mediates their ubiquitination and subsequent degradation. May regulate many important biological processes, such as cell survival and DNA damage response. Acts as an activator of the Wnt signaling pathway by mediating the ubiquitination of poly-ADP-ribosylated proteins. Neuroprotective protein. Protects against cell death induced by DNA damaging agents and rescues cells from G1 arrest. Promotes cell survival after gamma-irradiation. Facilitates DNA repair. The protein is E3 ubiquitin-protein ligase rnf146 (rnf146) of Danio rerio (Zebrafish).